A 501-amino-acid polypeptide reads, in one-letter code: Lysine--tRNA ligase (501 aa).

Positions 411 and 418 each coordinate Mg(2+).

It belongs to the class-II aminoacyl-tRNA synthetase family. In terms of assembly, homodimer. Requires Mg(2+) as cofactor.

The protein localises to the cytoplasm. The enzyme catalyses tRNA(Lys) + L-lysine + ATP = L-lysyl-tRNA(Lys) + AMP + diphosphate. The polypeptide is Lysine--tRNA ligase (Pseudomonas aeruginosa (strain UCBPP-PA14)).